A 195-amino-acid chain; its full sequence is Thioredoxin reductase-like selenoprotein T (195 aa).

Residues 1–19 (MRLLLLLLVAASAVVRSDA) form the signal peptide. The cysteinyl-selenocysteine (Cys-Sec) cross-link spans 46–49 (CVSU). A non-standard amino acid (selenocysteine) is located at residue Sec49. A helical transmembrane segment spans residues 85–103 (IASFLSVFKLVLIGLIIVG).

Belongs to the SelWTH family. Selenoprotein T subfamily. In terms of processing, may contain a selenide-sulfide bond between Cys-46 and Sec-49. This bond is speculated to serve as redox-active pair.

The protein localises to the endoplasmic reticulum membrane. It carries out the reaction [thioredoxin]-dithiol + NADP(+) = [thioredoxin]-disulfide + NADPH + H(+). Its function is as follows. Selenoprotein with thioredoxin reductase-like oxidoreductase activity. Protects dopaminergic neurons against oxidative stress and cell death. Involved in ADCYAP1/PACAP-induced calcium mobilization and neuroendocrine secretion. Plays a role in fibroblast anchorage and redox regulation. In gastric smooth muscle, modulates the contraction processes through the regulation of calcium release and MYLK activation. In pancreatic islets, involved in the control of glucose homeostasis, contributes to prolonged ADCYAP1/PACAP-induced insulin secretion. This Bos taurus (Bovine) protein is Thioredoxin reductase-like selenoprotein T.